The chain runs to 470 residues: UDP-glycosyltransferase 91A1 (470 aa).

UDP-alpha-D-glucose is bound by residues serine 290, valine 350 to glutamine 352, histidine 367 to glutamate 375, and valine 389 to glutamine 392.

This sequence belongs to the UDP-glycosyltransferase family.

The polypeptide is UDP-glycosyltransferase 91A1 (UGT91A1) (Arabidopsis thaliana (Mouse-ear cress)).